The sequence spans 313 residues: MALRICVTYTPALPIGLCTRCCLCLEQSPSWCHCLRGVSFLTFHLHQSVPLGDRDSLLMFTRQAGHFVEGSKAGRSRGRLCLSQALRVAVRGAFVSLWFAAGAGDRERNKGDKGAQTGAGLSQEAEDVDVSRARRVTDAPQGTLCGTGNRNSGSQSARVVGVAHLGEAFRVGVEQAISSCPEEVHGRHGLSMEIMWARMDVALRSPGRGLLAGAGALCMTLAESSCPDYERGRRACLTLHRHPTPHCSTWGLPLRVAGSWLTVVTVEALGGWRMGVRRTGQVGPTMHPPPVSGASPLLLHHLLLLLLIIILTC.

Residues 107 to 129 are disordered; sequence ERNKGDKGAQTGAGLSQEAEDVD.

This Homo sapiens (Human) protein is Myeloma-overexpressed gene protein (MYEOV).